The sequence spans 183 residues: Ribosome rescue factor SmrB (183 aa).

The 76-residue stretch at 98-173 folds into the Smr domain; sequence LDLHGLTQQQ…GDAALLVLIE (76 aa).

This sequence belongs to the SmrB family. Associates with collided ribosomes, but not with correctly translating polysomes.

Functionally, acts as a ribosome collision sensor. Detects stalled/collided disomes (pairs of ribosomes where the leading ribosome is stalled and a second ribosome has collided with it) and endonucleolytically cleaves mRNA at the 5' boundary of the stalled ribosome. Stalled/collided disomes form a new interface (primarily via the 30S subunits) that binds SmrB. Cleaved mRNA becomes available for tmRNA ligation, leading to ribosomal subunit dissociation and rescue of stalled ribosomes. This Klebsiella pneumoniae (strain 342) protein is Ribosome rescue factor SmrB.